Consider the following 137-residue polypeptide: Large ribosomal subunit protein uL16 (137 aa).

Belongs to the universal ribosomal protein uL16 family. In terms of assembly, part of the 50S ribosomal subunit.

Binds 23S rRNA and is also seen to make contacts with the A and possibly P site tRNAs. The sequence is that of Large ribosomal subunit protein uL16 from Nitratidesulfovibrio vulgaris (strain ATCC 29579 / DSM 644 / CCUG 34227 / NCIMB 8303 / VKM B-1760 / Hildenborough) (Desulfovibrio vulgaris).